The primary structure comprises 325 residues: Aspartate carbamoyltransferase catalytic subunit (325 aa).

2 residues coordinate carbamoyl phosphate: R55 and T56. K83 serves as a coordination point for L-aspartate. Positions 105, 135, and 138 each coordinate carbamoyl phosphate. L-aspartate contacts are provided by R176 and R230. Carbamoyl phosphate contacts are provided by G271 and P272.

Belongs to the aspartate/ornithine carbamoyltransferase superfamily. ATCase family. As to quaternary structure, heterododecamer (2C3:3R2) of six catalytic PyrB chains organized as two trimers (C3), and six regulatory PyrI chains organized as three dimers (R2).

The enzyme catalyses carbamoyl phosphate + L-aspartate = N-carbamoyl-L-aspartate + phosphate + H(+). Its pathway is pyrimidine metabolism; UMP biosynthesis via de novo pathway; (S)-dihydroorotate from bicarbonate: step 2/3. Its function is as follows. Catalyzes the condensation of carbamoyl phosphate and aspartate to form carbamoyl aspartate and inorganic phosphate, the committed step in the de novo pyrimidine nucleotide biosynthesis pathway. The protein is Aspartate carbamoyltransferase catalytic subunit of Streptomyces avermitilis (strain ATCC 31267 / DSM 46492 / JCM 5070 / NBRC 14893 / NCIMB 12804 / NRRL 8165 / MA-4680).